A 2131-amino-acid chain; its full sequence is Nonribosomal peptide synthetase criC (2131 aa).

Residues 13-407 are adenylation 1; that stretch reads FSQQCFQHPD…GRRDRVTKIR (395 aa). The 77-residue stretch at 525–601 folds into the Carrier 1 domain; it reads SGPLTIDQTI…ALVEKNRHET (77 aa). Serine 562 is subject to O-(pantetheine 4'-phosphoryl)serine. Residues 598–627 are disordered; that stretch reads RHETENRPDSSAFATRTPEESSMPTQGPVT. The tract at residues 625-1018 is condensation 1; the sequence is PVTPLQKRMV…YMSLLDAFLD (394 aa). The adenylation 2 stretch occupies residues 1069 to 1447; the sequence is ASLHPTHIAV…GRKDRQVKVR (379 aa). The Carrier 2 domain occupies 1569-1647; that stretch reads SSEAHLEKLI…DLITLVAQQQ (79 aa). Serine 1607 carries the post-translational modification O-(pantetheine 4'-phosphoryl)serine. Positions 1688 to 2086 are condensation 2; it reads SQSQSTFNVP…EALLLECFRM (399 aa).

Belongs to the NRP synthetase family. Pantetheine 4'-phosphate is required as a cofactor.

The enzyme catalyses L-tryptophan + L-alanine + 2 ATP = cyclo(L-tryptophyl-L-alanyl) + 2 ADP + 2 phosphate + 2 H(+). Its pathway is secondary metabolite biosynthesis. The protein operates within alkaloid biosynthesis. In terms of biological role, nonribosomal peptide synthetase; part of the gene cluster that mediates the biosynthesis of echinulin family alkaloid. The pathway begins with the biosynthesis of the cyclic dipeptide cyclo-L-Trp-L-Ala (cyclo-TA) by the NRPS criC via condensation of L-alanine and L-tryptophan. The prenyltransferase criA then catalyzes the first prenylation step, a reverse prenylation reaction at C2, to yield preechinulin. Preechinulin is the substrate of the cytochrome P450 monooxygenase criE that catalyzes the formation of the double bond between C10 and C11 to produce neoechulin A. The unique prenyltransferase criF functions as a competitive enzyme with criE for preechinulin metabolization and uses preechinulin for effective regiospecific prenylations. Preechinulin is prenylated by criF at C5 or C7. C7-prenylation leads to accumulation of tardioxopiperazine B without further modification by criF. In contrast, the C5-prenylated tardioxopiperazine A can be prenylated again by criF, predominantly at C7 to form echinulin or less frequently at C4 to give variecolorin L. CriF also accepts neoechilunin A to produce varlecolorin G (prenylation at C5) or isoechinulin A (prenylation at C7). CriF further converts isoechinulin A into dehydroechinulin. Moreover, a yet unidentified enzyme can also convert neoechilunin A into neoechilunin B by introducing a double bond between positions C14 and C17 and thus provides a further substrate to criF for C5 and C7 prenylation. In Aspergillus cristatus (Chinese Fuzhuan brick tea-fermentation fungus), this protein is Nonribosomal peptide synthetase criC.